A 213-amino-acid chain; its full sequence is Imidazole glycerol phosphate synthase subunit HisH 2 (213 aa).

In terms of domain architecture, Glutamine amidotransferase type-1 spans 4-211; it reads RLGLIDYGMG…LNWLETGAKP (208 aa). Cysteine 82 acts as the Nucleophile in catalysis. Residues histidine 186 and glutamate 188 contribute to the active site.

As to quaternary structure, heterodimer of HisH and HisF.

The protein resides in the cytoplasm. The catalysed reaction is 5-[(5-phospho-1-deoxy-D-ribulos-1-ylimino)methylamino]-1-(5-phospho-beta-D-ribosyl)imidazole-4-carboxamide + L-glutamine = D-erythro-1-(imidazol-4-yl)glycerol 3-phosphate + 5-amino-1-(5-phospho-beta-D-ribosyl)imidazole-4-carboxamide + L-glutamate + H(+). The enzyme catalyses L-glutamine + H2O = L-glutamate + NH4(+). The protein operates within amino-acid biosynthesis; L-histidine biosynthesis; L-histidine from 5-phospho-alpha-D-ribose 1-diphosphate: step 5/9. IGPS catalyzes the conversion of PRFAR and glutamine to IGP, AICAR and glutamate. The HisH subunit provides the glutamine amidotransferase activity that produces the ammonia necessary to HisF for the synthesis of IGP and AICAR. The polypeptide is Imidazole glycerol phosphate synthase subunit HisH 2 (hisH2) (Prochlorococcus marinus (strain MIT 9313)).